We begin with the raw amino-acid sequence, 878 residues long: Pyruvate, phosphate dikinase (878 aa).

The interval 1–347 (MKKLIYYFGS…LYILQTRTAK (347 aa)) is N-terminal. Position 96 (R96) interacts with ATP. The interval 348–404 (RTAIAAINIAVQMVEEKLISKEQALMRIDPESLNQLLHTRIDYSKGLTSIAEGLPAS) is linker 1. The segment at 405-502 (PGAATGIAVF…VIKQGDIITI (98 aa)) is central. T457 is subject to Phosphothreonine; by PDRP1. Residue H459 is the Tele-phosphohistidine intermediate of the active site. Residues 503-537 (DGGSGKIFLGEMPLIQPTFSEESKLILDWADEISS) are linker 2. The interval 538 to 878 (LKVRANAETV…ASAQAKIKHG (341 aa)) is C-terminal. Positions 565, 621, 749, 770, 771, 772, and 773 each coordinate substrate. E749 lines the Mg(2+) pocket. A Mg(2+)-binding site is contributed by D773. Catalysis depends on C835, which acts as the Proton donor.

The protein belongs to the PEP-utilizing enzyme family. As to quaternary structure, homodimer. Requires Mg(2+) as cofactor. Phosphorylation of Thr-457 in the dark inactivates the enzyme. Dephosphorylation upon light stimulation reactivates the enzyme.

The catalysed reaction is pyruvate + phosphate + ATP = phosphoenolpyruvate + AMP + diphosphate + H(+). Activated by light-induced dephosphorylation. Inhibited by dark-induced phosphorylation. Both reactions are catalyzed by PDRP1. Its function is as follows. Catalyzes the reversible phosphorylation of pyruvate and phosphate. The protein is Pyruvate, phosphate dikinase (ppdK) of Rickettsia felis (strain ATCC VR-1525 / URRWXCal2) (Rickettsia azadi).